A 196-amino-acid chain; its full sequence is Putative NADH dehydrogenase/NAD(P)H nitroreductase SCO5049 (196 aa).

The protein belongs to the nitroreductase family. HadB/RutE subfamily. FMN serves as cofactor.

The protein is Putative NADH dehydrogenase/NAD(P)H nitroreductase SCO5049 of Streptomyces coelicolor (strain ATCC BAA-471 / A3(2) / M145).